Consider the following 85-residue polypeptide: Large ribosomal subunit protein bL27 (85 aa).

The tract at residues 1 to 24 (MAHKKGVGSSRNGRDSDGQRLGCK) is disordered.

The protein belongs to the bacterial ribosomal protein bL27 family.

The chain is Large ribosomal subunit protein bL27 from Geotalea daltonii (strain DSM 22248 / JCM 15807 / FRC-32) (Geobacter daltonii).